Reading from the N-terminus, the 111-residue chain is MPKIVILPHQDLCPDGAVLEANSGETILDAALRNGIEIEHACEKSCACTTCHCIVREGFDSLPESSEQEDDMLDKAWGLEPESRLSCQARVTDEDLVVEIPRYTINHAREH.

In terms of domain architecture, 2Fe-2S ferredoxin-type spans 2–104 (PKIVILPHQD…DLVVEIPRYT (103 aa)). 4 residues coordinate [2Fe-2S] cluster: cysteine 42, cysteine 48, cysteine 51, and cysteine 87.

The protein belongs to the adrenodoxin/putidaredoxin family. [2Fe-2S] cluster is required as a cofactor.

Its function is as follows. Ferredoxin are iron-sulfur proteins that transfer electrons in a wide variety of metabolic reactions. Although the function of this ferredoxin is unknown it is probable that it has a role as a cellular electron transfer protein. Involved in the in vivo assembly of the Fe-S clusters in a wide variety of iron-sulfur proteins. The sequence is that of 2Fe-2S ferredoxin (fdx) from Escherichia coli O157:H7.